The following is a 456-amino-acid chain: Cysteine--tRNA ligase (456 aa).

Residue cysteine 28 participates in Zn(2+) binding. The 'HIGH' region motif lies at 30–40 (ITVYDHCHLGH). 3 residues coordinate Zn(2+): cysteine 209, histidine 234, and glutamate 238. The 'KMSKS' region motif lies at 266–270 (KMAKS). Lysine 269 serves as a coordination point for ATP.

Belongs to the class-I aminoacyl-tRNA synthetase family. Monomer. It depends on Zn(2+) as a cofactor.

The protein localises to the cytoplasm. The enzyme catalyses tRNA(Cys) + L-cysteine + ATP = L-cysteinyl-tRNA(Cys) + AMP + diphosphate. The polypeptide is Cysteine--tRNA ligase (Legionella pneumophila subsp. pneumophila (strain Philadelphia 1 / ATCC 33152 / DSM 7513)).